A 446-amino-acid chain; its full sequence is Maltoporin (446 aa).

The first 25 residues, 1–25 (MMITLRKLPLAVAVAAGVMSAQAMA), serve as a signal peptide directing secretion.

Belongs to the porin LamB (TC 1.B.3) family. In terms of assembly, homotrimer formed of three 18-stranded antiparallel beta-barrels, containing three independent channels.

Its subcellular location is the cell outer membrane. The enzyme catalyses beta-maltose(in) = beta-maltose(out). In terms of biological role, involved in the transport of maltose and maltodextrins. The chain is Maltoporin from Escherichia coli O127:H6 (strain E2348/69 / EPEC).